We begin with the raw amino-acid sequence, 398 residues long: Palmitoyl-[acyl-carrier-protein] 4-desaturase 3, chloroplastic (398 aa).

A chloroplast-targeting transit peptide spans 1-29; it reads MALRSLFLPNAFPNASSFRGGSRRGAAPR. Fe cation is bound by residues Glu139, Glu177, His180, Glu230, Glu263, and His266.

It belongs to the fatty acid desaturase type 2 family. As to quaternary structure, homodimer. It depends on Fe(2+) as a cofactor. As to expression, preferentially expressed in the flower labellum. Low expression in leaves.

Its subcellular location is the plastid. The protein resides in the chloroplast stroma. It carries out the reaction hexadecanoyl-[ACP] + 2 reduced [2Fe-2S]-[ferredoxin] + O2 + 2 H(+) = (4Z)-hexadecenoyl-[ACP] + 2 oxidized [2Fe-2S]-[ferredoxin] + 2 H2O. It functions in the pathway lipid metabolism; fatty acid metabolism. In terms of biological role, converts palmitoyl-ACP to (4Z)-hexadec-4-enoyl-ACP by introduction of a cis double bond between carbons 4 and 5 of the acyl chain. This is Palmitoyl-[acyl-carrier-protein] 4-desaturase 3, chloroplastic (SAD3) from Ophrys arachnitiformis subsp. archipelagi (Orchid).